Consider the following 202-residue polypeptide: Recombination protein RecR (202 aa).

The segment at 61-76 adopts a C4-type zinc-finger fold; that stretch reads CARCNSFTEDDICATC. Residues 84–179 enclose the Toprim domain; that stretch reads SVLCVVETPA…KVTRLARGVP (96 aa).

The protein belongs to the RecR family.

In terms of biological role, may play a role in DNA repair. It seems to be involved in an RecBC-independent recombinational process of DNA repair. It may act with RecF and RecO. This is Recombination protein RecR from Bordetella petrii (strain ATCC BAA-461 / DSM 12804 / CCUG 43448).